Reading from the N-terminus, the 212-residue chain is Elongation factor Ts (212 aa).

The involved in Mg(2+) ion dislocation from EF-Tu stretch occupies residues 82-85; it reads SDFV.

Belongs to the EF-Ts family.

It localises to the cytoplasm. Associates with the EF-Tu.GDP complex and induces the exchange of GDP to GTP. It remains bound to the aminoacyl-tRNA.EF-Tu.GTP complex up to the GTP hydrolysis stage on the ribosome. The protein is Elongation factor Ts of Solibacter usitatus (strain Ellin6076).